The chain runs to 469 residues: 3-isopropylmalate dehydratase large subunit (469 aa).

Positions 347, 408, and 411 each coordinate [4Fe-4S] cluster.

This sequence belongs to the aconitase/IPM isomerase family. LeuC type 1 subfamily. Heterodimer of LeuC and LeuD. The cofactor is [4Fe-4S] cluster.

It catalyses the reaction (2R,3S)-3-isopropylmalate = (2S)-2-isopropylmalate. It functions in the pathway amino-acid biosynthesis; L-leucine biosynthesis; L-leucine from 3-methyl-2-oxobutanoate: step 2/4. Catalyzes the isomerization between 2-isopropylmalate and 3-isopropylmalate, via the formation of 2-isopropylmaleate. The protein is 3-isopropylmalate dehydratase large subunit of Haemophilus influenzae (strain PittEE).